We begin with the raw amino-acid sequence, 1775 residues long: Stereocilin (1775 aa).

The signal sequence occupies residues 1 to 22 (MALSLWPLLLLLLLLLLLSFAV). Residues Asn65, Asn202, Asn297, Asn366, Asn427, Asn476, Asn540, Asn565, Asn656, Asn824, Asn916, Asn964, Asn1179, and Asn1274 are each glycosylated (N-linked (GlcNAc...) asparagine).

It belongs to the stereocilin family.

It is found in the cell surface. Its subcellular location is the cell projection. The protein resides in the kinocilium. The protein localises to the stereocilium. Functionally, essential to the formation of horizontal top connectors between outer hair cell stereocilia. This is Stereocilin (STRC) from Homo sapiens (Human).